Consider the following 261-residue polypeptide: Phosphonates import ATP-binding protein PhnC (261 aa).

The ABC transporter domain occupies 9–253; sequence IQLKDVSKIY…VFDDIYNGGN (245 aa). Residue 42 to 49 participates in ATP binding; the sequence is GLSGAGKS.

Belongs to the ABC transporter superfamily. Phosphonates importer (TC 3.A.1.9.1) family. In terms of assembly, the complex is composed of two ATP-binding proteins (PhnC), two transmembrane proteins (PhnE) and a solute-binding protein (PhnD).

It is found in the cell membrane. The catalysed reaction is phosphonate(out) + ATP + H2O = phosphonate(in) + ADP + phosphate + H(+). Part of the ABC transporter complex PhnCDE involved in phosphonates import. Responsible for energy coupling to the transport system. This chain is Phosphonates import ATP-binding protein PhnC, found in Lactobacillus gasseri (strain ATCC 33323 / DSM 20243 / BCRC 14619 / CIP 102991 / JCM 1131 / KCTC 3163 / NCIMB 11718 / NCTC 13722 / AM63).